The sequence spans 204 residues: FMN-dependent NADH:quinone oxidoreductase (204 aa).

FMN-binding positions include Ser9, 15-17, 95-98, and 139-142; these read SVS, MYNF, and SRGG.

The protein belongs to the azoreductase type 1 family. In terms of assembly, homodimer. It depends on FMN as a cofactor.

The enzyme catalyses 2 a quinone + NADH + H(+) = 2 a 1,4-benzosemiquinone + NAD(+). It catalyses the reaction N,N-dimethyl-1,4-phenylenediamine + anthranilate + 2 NAD(+) = 2-(4-dimethylaminophenyl)diazenylbenzoate + 2 NADH + 2 H(+). In terms of biological role, quinone reductase that provides resistance to thiol-specific stress caused by electrophilic quinones. Functionally, also exhibits azoreductase activity. Catalyzes the reductive cleavage of the azo bond in aromatic azo compounds to the corresponding amines. This Methylocella silvestris (strain DSM 15510 / CIP 108128 / LMG 27833 / NCIMB 13906 / BL2) protein is FMN-dependent NADH:quinone oxidoreductase.